The primary structure comprises 291 residues: Ribose-phosphate pyrophosphokinase (291 aa).

Residues 34-36 (DGE) and 93-94 (RQ) contribute to the ATP site. The Mg(2+) site is built by H127 and D165. The active site involves K188. Residues R190, D216, and 220-224 (STGGT) contribute to the D-ribose 5-phosphate site.

The protein belongs to the ribose-phosphate pyrophosphokinase family. Class III (archaeal) subfamily. Homodimer. Mg(2+) is required as a cofactor.

It is found in the cytoplasm. It carries out the reaction D-ribose 5-phosphate + ATP = 5-phospho-alpha-D-ribose 1-diphosphate + AMP + H(+). The protein operates within metabolic intermediate biosynthesis; 5-phospho-alpha-D-ribose 1-diphosphate biosynthesis; 5-phospho-alpha-D-ribose 1-diphosphate from D-ribose 5-phosphate (route I): step 1/1. In terms of biological role, involved in the biosynthesis of the central metabolite phospho-alpha-D-ribosyl-1-pyrophosphate (PRPP) via the transfer of pyrophosphoryl group from ATP to 1-hydroxyl of ribose-5-phosphate (Rib-5-P). The sequence is that of Ribose-phosphate pyrophosphokinase from Saccharolobus solfataricus (strain ATCC 35092 / DSM 1617 / JCM 11322 / P2) (Sulfolobus solfataricus).